The following is a 296-amino-acid chain: Probable endonuclease 4 (296 aa).

Zn(2+) contacts are provided by His-68, His-109, Glu-144, Asp-178, His-181, His-213, Asp-226, His-228, and Glu-258.

This sequence belongs to the AP endonuclease 2 family. It depends on Zn(2+) as a cofactor.

It catalyses the reaction Endonucleolytic cleavage to 5'-phosphooligonucleotide end-products.. Its function is as follows. Endonuclease IV plays a role in DNA repair. It cleaves phosphodiester bonds at apurinic or apyrimidinic (AP) sites, generating a 3'-hydroxyl group and a 5'-terminal sugar phosphate. The sequence is that of Probable endonuclease 4 from Staphylococcus aureus (strain Mu3 / ATCC 700698).